The sequence spans 485 residues: UDP-N-acetylmuramate--L-alanine ligase (485 aa).

129–135 serves as a coordination point for ATP; that stretch reads GTHGKTT.

It belongs to the MurCDEF family.

The protein resides in the cytoplasm. The catalysed reaction is UDP-N-acetyl-alpha-D-muramate + L-alanine + ATP = UDP-N-acetyl-alpha-D-muramoyl-L-alanine + ADP + phosphate + H(+). The protein operates within cell wall biogenesis; peptidoglycan biosynthesis. Functionally, cell wall formation. This Vibrio campbellii (strain ATCC BAA-1116) protein is UDP-N-acetylmuramate--L-alanine ligase.